We begin with the raw amino-acid sequence, 156 residues long: Small ribosomal subunit protein uS7c (156 aa).

The protein belongs to the universal ribosomal protein uS7 family. Part of the 30S ribosomal subunit.

The protein localises to the plastid. It localises to the chloroplast. In terms of biological role, one of the primary rRNA binding proteins, it binds directly to 16S rRNA where it nucleates assembly of the head domain of the 30S subunit. This chain is Small ribosomal subunit protein uS7c (rps7), found in Pisum sativum (Garden pea).